Consider the following 275-residue polypeptide: MPVVWTIARKELADGLRNRWLLAISLLFALLSVGIAWFGAAAAGQVGFTSVPATVASLTSLATFLMPLIALLLAYDAIVGEEEGGTLLLLLTYPLGRGQLLLGKFLGHGLILALATLIGFGSAALAILALVPEVEAAILLGAFGRFMGSSLLLGCVFLALAYALSSRASEKSSAAGQALGLWFFFVLLFDLALLAILVLSQGHLSPRLLPWLLLLNPTDLYRLINLSGFDAAAAGGVVPLASDLPVSASALWLALALWAGAALALAHGLFRRRPI.

Helical transmembrane passes span 20-40 (WLLAISLLFALLSVGIAWFGA), 60-80 (SLATFLMPLIALLLAYDAIVG), 111-131 (ILALATLIGFGSAALAILALV), 146-166 (FMGSSLLLGCVFLALAYALSS), 179-199 (LGLWFFFVLLFDLALLAILVL), and 250-270 (ALWLALALWAGAALALAHGLF).

In terms of assembly, the complex may be composed of an ATP-binding protein (NosF), a transmembrane protein (NosY) and a solute-binding protein (NosD).

It is found in the cell inner membrane. Its function is as follows. Required for the assembly of the copper chromophores of nitrous oxide reductase. Could be part of the ABC transporter complex NosDFY. The polypeptide is Probable ABC transporter permease protein NosY (nosY) (Pseudomonas aeruginosa (strain ATCC 15692 / DSM 22644 / CIP 104116 / JCM 14847 / LMG 12228 / 1C / PRS 101 / PAO1)).